The sequence spans 122 residues: Large ribosomal subunit protein uL14c (122 aa).

The protein belongs to the universal ribosomal protein uL14 family. In terms of assembly, part of the 50S ribosomal subunit.

It localises to the plastid. The protein localises to the chloroplast. Functionally, binds to 23S rRNA. The chain is Large ribosomal subunit protein uL14c from Welwitschia mirabilis (Tree tumbo).